We begin with the raw amino-acid sequence, 570 residues long: Interleukin-1 receptor accessory protein (570 aa).

A signal peptide spans 1-20 (MGLLWYLMSLSFYGILQSHA). 3 Ig-like C2-type domains span residues 21-128 (SERC…VAFP), 139-230 (NSAM…RTVT), and 243-348 (PQIY…AKVK). Residues 21 to 367 (SERCDDWGLD…VELACGFGAT (347 aa)) lie on the Extracellular side of the membrane. Disulfide bonds link Cys24–Cys122, Cys47–Cys114, Cys137–Cys181, Cys160–Cys212, and Cys266–Cys332. N-linked (GlcNAc...) asparagine glycosylation occurs at Asn57. The segment at 69–85 (IWYWTRQDRDLEEPINF) is essential for interaction with PTPRD. N-linked (GlcNAc...) asparagine glycans are attached at residues Asn107, Asn111, and Asn118. Residues Asn196, Asn209, and Asn299 are each glycosylated (N-linked (GlcNAc...) asparagine). Residues 368 to 388 (VFLVVVLIVVYHVYWLEMVLF) form a helical membrane-spanning segment. Residues 389–570 (YRAHFGTDET…GLSYSSLKNV (182 aa)) are Cytoplasmic-facing. Residues 403–546 (KEYDIYVSYA…RFWKQLQVAM (144 aa)) enclose the TIR domain. Glu482 is a catalytic residue. The tract at residues 550-570 (KSPRWSSNDKQGLSYSSLKNV) is disordered. Polar residues predominate over residues 553-570 (RWSSNDKQGLSYSSLKNV).

The protein belongs to the interleukin-1 receptor family. The interleukin-36 receptor complex is a heterodimer of IL1RL2 and IL1RAP; the association is inhibited by IL36RN. The interleukin-1 receptor complex is a heterodimer of IL1R1 and IL1RAP. Associates with IL1R2 to form a non-signaling interleukin-1 receptor complex. Interacts with IL-33-bound IL1RL1 to form the minimal interleukin-33 signaling complex with a 1:1:1 stoichiometry. Interacts with KIT (independently of stimulation with KITLG/SCF). A mast cell-specific KITLG/SCF-induced interleukin-33 signaling complex contains IL1RL1, IL1RAP, KIT and MYD88. Interacts (via the first immunoglobilin domain) with PTPRD (via the third immunoglobilin domain); induces pre- and postsynaptic differentiation of neurons. In terms of tissue distribution, detected in lung, brain, spleen, thymus and liver. Expressed in brain endothelial cells, astrocytes, microglia and neurons. Isoform 3 is predominantly expressed in brain; expressed in hippocampal neurons.

It is found in the cell membrane. Its subcellular location is the secreted. The enzyme catalyses NAD(+) + H2O = ADP-D-ribose + nicotinamide + H(+). Its function is as follows. Coreceptor for IL1RL2 in the IL-36 signaling system. Coreceptor with IL1R1 in the IL-1 signaling system. Associates with IL1R1 bound to IL1B to form the high affinity interleukin-1 receptor complex which mediates interleukin-1-dependent activation of NF-kappa-B and other pathways. Signaling involves the recruitment of adapter molecules such as TOLLIP, MYD88, and IRAK1 or IRAK2 via the respective TIR domains of the receptor/coreceptor subunits. Recruits TOLLIP to the signaling complex. Does not bind to interleukin-1 alone; binding of IL1RN to IL1R1, prevents its association with IL1R1 to form a signaling complex. The cellular response is modulated through a non-signaling association with the membrane IL1R2 decoy receptor. Secreted forms (isoforms 2 and 3) associate with secreted ligand-bound IL1R2 and increase the affinity of secreted IL1R2 for IL1B; this complex formation may be the dominant mechanism for neutralization of IL1B by secreted/soluble receptors. Coreceptor for IL1RL1 in the IL-33 signaling system. Can bidirectionally induce pre- and postsynaptic differentiation of neurons by trans-synaptically binding to PTPRD. May play a role in IL1B-mediated costimulation of IFNG production from T-helper 1 (Th1) cells. Functionally, associates with secreted ligand-bound IL1R2 and increases the affinity of secreted IL1R2 for IL1B; this complex formation may be the dominant mechanism for neutralization of IL1B by secreted/soluble receptors. Enhances the ability of secreted IL1R1 to inhibit IL-33 signaling. Required for Src phosphorylation by IL1B. Required for IL1B-potentiated NMDA-induced calcium influx in neurons acting in cooperation with IL1R1 isoform 2 to mediate Akt kinase activation. The chain is Interleukin-1 receptor accessory protein (Il1rap) from Mus musculus (Mouse).